The following is a 358-amino-acid chain: Protein RecA 2 (358 aa).

69 to 76 contacts ATP; that stretch reads GPESSGKT. A disordered region spans residues 331 to 358; that stretch reads GIGKSGAPSPRRRTSPRRPKVAARSAAV. Over residues 340-351 the composition is skewed to basic residues; the sequence is PRRRTSPRRPKV.

This sequence belongs to the RecA family.

It localises to the cytoplasm. Functionally, can catalyze the hydrolysis of ATP in the presence of single-stranded DNA, the ATP-dependent uptake of single-stranded DNA by duplex DNA, and the ATP-dependent hybridization of homologous single-stranded DNAs. It interacts with LexA causing its activation and leading to its autocatalytic cleavage. The sequence is that of Protein RecA 2 from Myxococcus xanthus.